Reading from the N-terminus, the 150-residue chain is Large ribosomal subunit protein uL15 (150 aa).

Residues 1-51 are disordered; that stretch reads MKLHTLRPAKGSVKTSKRIGRGTGSGRGGTSTKGHKGAKSRSGYSSKIGFE. The segment covering 21–31 has biased composition (gly residues); it reads RGTGSGRGGTS.

It belongs to the universal ribosomal protein uL15 family. In terms of assembly, part of the 50S ribosomal subunit.

Functionally, binds to the 23S rRNA. This chain is Large ribosomal subunit protein uL15, found in Cytophaga hutchinsonii (strain ATCC 33406 / DSM 1761 / CIP 103989 / NBRC 15051 / NCIMB 9469 / D465).